Consider the following 542-residue polypeptide: Peptide chain release factor 3 (542 aa).

Residues 14–283 (ELRRNFAIIS…YFLEYALKPG (270 aa)) enclose the tr-type G domain. GTP is bound by residues 23–30 (SHPDAGKT), 91–95 (DTPGH), and 145–148 (NKLD).

The protein belongs to the TRAFAC class translation factor GTPase superfamily. Classic translation factor GTPase family. PrfC subfamily.

It is found in the cytoplasm. In terms of biological role, increases the formation of ribosomal termination complexes and stimulates activities of RF-1 and RF-2. It binds guanine nucleotides and has strong preference for UGA stop codons. It may interact directly with the ribosome. The stimulation of RF-1 and RF-2 is significantly reduced by GTP and GDP, but not by GMP. The protein is Peptide chain release factor 3 of Nostoc punctiforme (strain ATCC 29133 / PCC 73102).